Consider the following 330-residue polypeptide: Mas-related G-protein coupled receptor member B8 (330 aa).

Over 1 to 33 (MDSSFPDWNIEFREQNESYFMESSSCDMSLAMS) the chain is Extracellular. The N-linked (GlcNAc...) asparagine glycan is linked to N16. The helical transmembrane segment at 34–54 (LLSIIIAIIGLTGNVIVLQLL) threads the bilayer. At 55-62 (GFHMHRNA) the chain is on the cytoplasmic side. The chain crosses the membrane as a helical span at residues 63–83 (FSVYIFNLSGANFLFLCTHIV). At 84–101 (FSLENLIRQFHYIDIHMA) the chain is on the extracellular side. Residues 102-122 (LFSVNVTILAYLAGVSMITAI) traverse the membrane as a helical segment. Topologically, residues 123 to 146 (SVEYWLSVLWPTWYHAQRPKHTST) are cytoplasmic. A helical transmembrane segment spans residues 147-167 (VICTLLWVFSLLLTLWNWIIC). At 168–177 (KVLDYIYNWD) the chain is on the extracellular side. Residues 178-198 (MCWKLALIIVVWLLVLFVVLS) form a helical membrane-spanning segment. The Cytoplasmic segment spans residues 199-219 (RSNQALLFRVFCGSQQTPVTR). The helical transmembrane segment at 220-240 (LLVTIMLTALVVLICGFGIGI) threads the bilayer. Topologically, residues 241–260 (CFFYWKKEENSIMPCGYFYE) are extracellular. A helical transmembrane segment spans residues 261 to 281 (TILLLSGVNSCANPIICLFVG). The Cytoplasmic portion of the chain corresponds to 282–330 (SIKHCQFQCGTLRLILQRAIQESPEEEDEEVEEVVEQEGGEEDEESTTL). The disordered stretch occupies residues 302 to 330 (QESPEEEDEEVEEVVEQEGGEEDEESTTL). Acidic residues predominate over residues 304-330 (SPEEEDEEVEEVVEQEGGEEDEESTTL).

Belongs to the G-protein coupled receptor 1 family. Mas subfamily.

The protein localises to the membrane. Its function is as follows. Orphan receptor. Probably involved in the function of nociceptive neurons. May regulate nociceptor function and/or development, including the sensation or modulation of pain. The sequence is that of Mas-related G-protein coupled receptor member B8 (Mrgprb8) from Mus musculus (Mouse).